The sequence spans 364 residues: Cell division protein FtsZ 1 (364 aa).

GTP-binding positions include 47-48, 97-99, 134-136, glutamate 165, arginine 169, and aspartate 212; these read GA, AGG, and GTG.

This sequence belongs to the FtsZ family. Homodimer. Polymerizes to form a dynamic ring structure in a strictly GTP-dependent manner. Interacts directly with several other division proteins.

The protein resides in the cytoplasm. Functionally, essential cell division protein that forms a contractile ring structure (Z ring) at the future cell division site. The regulation of the ring assembly controls the timing and the location of cell division. One of the functions of the FtsZ ring is to recruit other cell division proteins to the septum to produce a new cell wall between the dividing cells. Binds GTP and shows GTPase activity. This chain is Cell division protein FtsZ 1, found in Methanocaldococcus jannaschii (strain ATCC 43067 / DSM 2661 / JAL-1 / JCM 10045 / NBRC 100440) (Methanococcus jannaschii).